Consider the following 70-residue polypeptide: DNA-directed RNA polymerases I, II, and III subunit rpabc5 (70 aa).

Zn(2+) contacts are provided by Cys7, Cys10, Cys44, and Cys45.

It belongs to the archaeal Rpo10/eukaryotic RPB10 RNA polymerase subunit family. In terms of assembly, component of the RNA polymerase I (Pol I), RNA polymerase II (Pol II) and RNA polymerase III (Pol III) complexes.

The protein resides in the nucleus. Its function is as follows. DNA-dependent RNA polymerase catalyzes the transcription of DNA into RNA using the four ribonucleoside triphosphates as substrates. Common component of RNA polymerases I, II and III which synthesize ribosomal RNA precursors, mRNA precursors and many functional non-coding RNAs, and a small RNAs, such as 5S rRNA and tRNAs, respectively. Pol II is the central component of the basal RNA polymerase II transcription machinery. Pols are composed of mobile elements that move relative to each other. In Pol II, RBP10 is part of the core element with the central large cleft. The sequence is that of DNA-directed RNA polymerases I, II, and III subunit rpabc5 (polr2l) from Dictyostelium discoideum (Social amoeba).